The sequence spans 267 residues: Orotidine 5'-phosphate decarboxylase (267 aa).

Substrate is bound by residues Asp-40, 62–64, 93–102, Tyr-215, and Arg-234; these read KTH and DRKFADIGNT. Lys-95 (proton donor) is an active-site residue.

The protein belongs to the OMP decarboxylase family.

It catalyses the reaction orotidine 5'-phosphate + H(+) = UMP + CO2. The protein operates within pyrimidine metabolism; UMP biosynthesis via de novo pathway; UMP from orotate: step 2/2. The sequence is that of Orotidine 5'-phosphate decarboxylase (pyrG) from Phycomyces blakesleeanus (strain ATCC 8743b / DSM 1359 / FGSC 10004 / NBRC 33097 / NRRL 1555).